The primary structure comprises 284 residues: 2-dehydro-3-deoxyphosphooctonate aldolase (284 aa).

It belongs to the KdsA family.

It localises to the cytoplasm. It carries out the reaction D-arabinose 5-phosphate + phosphoenolpyruvate + H2O = 3-deoxy-alpha-D-manno-2-octulosonate-8-phosphate + phosphate. The protein operates within carbohydrate biosynthesis; 3-deoxy-D-manno-octulosonate biosynthesis; 3-deoxy-D-manno-octulosonate from D-ribulose 5-phosphate: step 2/3. It participates in bacterial outer membrane biogenesis; lipopolysaccharide biosynthesis. This Sodalis glossinidius (strain morsitans) protein is 2-dehydro-3-deoxyphosphooctonate aldolase.